The sequence spans 212 residues: Stromal cell-derived factor 2-like protein (212 aa).

The first 19 residues, 1–19 (MKSLFLILILCITIPLIFA), serve as a signal peptide directing secretion. Asn20 is a glycosylation site (N-linked (GlcNAc...) asparagine). 3 consecutive MIR domains span residues 29–86 (ITKV…IKGP), 94–149 (GTVV…VETE), and 151–206 (GKEW…TEEG).

It is found in the secreted. This Dictyostelium discoideum (Social amoeba) protein is Stromal cell-derived factor 2-like protein.